We begin with the raw amino-acid sequence, 310 residues long: Methionyl-tRNA formyltransferase (310 aa).

109–112 is a (6S)-5,6,7,8-tetrahydrofolate binding site; sequence SLLP.

Belongs to the Fmt family.

The enzyme catalyses L-methionyl-tRNA(fMet) + (6R)-10-formyltetrahydrofolate = N-formyl-L-methionyl-tRNA(fMet) + (6S)-5,6,7,8-tetrahydrofolate + H(+). In terms of biological role, attaches a formyl group to the free amino group of methionyl-tRNA(fMet). The formyl group appears to play a dual role in the initiator identity of N-formylmethionyl-tRNA by promoting its recognition by IF2 and preventing the misappropriation of this tRNA by the elongation apparatus. The chain is Methionyl-tRNA formyltransferase from Pseudomonas putida (strain GB-1).